The primary structure comprises 327 residues: uncharacterized protein (327 aa).

A helical transmembrane segment spans residues 266-285 (IGLLAAGSVALTSLCHLLCY). The disordered stretch occupies residues 297–327 (EEENEAAEETAAGEASAVAAAAVSEEEQQRE). A compositionally biased stretch (low complexity) spans 305-319 (ETAAGEASAVAAAAV).

Belongs to the HHV-5 UL14 protein family.

It is found in the host membrane. This is an uncharacterized protein from Human cytomegalovirus (strain Merlin) (HHV-5).